The sequence spans 957 residues: Glycine dehydrogenase (decarboxylating) (957 aa).

The residue at position 708 (Lys-708) is an N6-(pyridoxal phosphate)lysine.

It belongs to the GcvP family. In terms of assembly, the glycine cleavage system is composed of four proteins: P, T, L and H. It depends on pyridoxal 5'-phosphate as a cofactor.

The enzyme catalyses N(6)-[(R)-lipoyl]-L-lysyl-[glycine-cleavage complex H protein] + glycine + H(+) = N(6)-[(R)-S(8)-aminomethyldihydrolipoyl]-L-lysyl-[glycine-cleavage complex H protein] + CO2. In terms of biological role, the glycine cleavage system catalyzes the degradation of glycine. The P protein binds the alpha-amino group of glycine through its pyridoxal phosphate cofactor; CO(2) is released and the remaining methylamine moiety is then transferred to the lipoamide cofactor of the H protein. This chain is Glycine dehydrogenase (decarboxylating), found in Shigella boydii serotype 4 (strain Sb227).